The following is a 667-amino-acid chain: DNA ligase (667 aa).

NAD(+)-binding positions include aspartate 34 to aspartate 38, serine 83 to leucine 84, and glutamate 117. Lysine 119 (N6-AMP-lysine intermediate) is an active-site residue. NAD(+) contacts are provided by arginine 140, glutamate 176, lysine 289, and lysine 313. 4 residues coordinate Zn(2+): cysteine 407, cysteine 410, cysteine 425, and cysteine 431. The 77-residue stretch at glutamine 591–methionine 667 folds into the BRCT domain.

Belongs to the NAD-dependent DNA ligase family. LigA subfamily. Mg(2+) is required as a cofactor. Mn(2+) serves as cofactor.

It carries out the reaction NAD(+) + (deoxyribonucleotide)n-3'-hydroxyl + 5'-phospho-(deoxyribonucleotide)m = (deoxyribonucleotide)n+m + AMP + beta-nicotinamide D-nucleotide.. Its function is as follows. DNA ligase that catalyzes the formation of phosphodiester linkages between 5'-phosphoryl and 3'-hydroxyl groups in double-stranded DNA using NAD as a coenzyme and as the energy source for the reaction. It is essential for DNA replication and repair of damaged DNA. The polypeptide is DNA ligase (Chlorobium chlorochromatii (strain CaD3)).